The sequence spans 423 residues: Steroid hormone receptor ERR1 (423 aa).

The segment at 1–67 is disordered; that stretch reads MSSQVVGIEP…GAGPGEQGGG (67 aa). The repressor domain stretch occupies residues 1-76; that stretch reads MSSQVVGIEP…GKLVLSSLPK (76 aa). Residue lysine 14 forms a Glycyl lysine isopeptide (Lys-Gly) (interchain with G-Cter in SUMO) linkage. Phosphoserine is present on residues serine 19 and serine 22. Positions 58–67 are enriched in gly residues; the sequence is GAGPGEQGGG. Positions 76–151 form a DNA-binding region, nuclear receptor; the sequence is KRLCLVCGDV…VGMLKEGVRL (76 aa). 2 consecutive NR C4-type zinc fingers follow at residues 79–99 and 115–134; these read CLVC…CEAC and CPAS…CQAC. Residues lysine 129, lysine 138, lysine 160, and lysine 162 each carry the N6-acetyllysine; by PCAF/KAT2B modification. Lysine 189 participates in a covalent cross-link: Glycyl lysine isopeptide (Lys-Gly) (interchain with G-Cter in SUMO2). Residues 193 to 421 enclose the NR LBD domain; that stretch reads PVNALVSHLL…KLFLEMLEAM (229 aa). Lysine 403 participates in a covalent cross-link: Glycyl lysine isopeptide (Lys-Gly) (interchain with G-Cter in SUMO); alternate. Lysine 403 participates in a covalent cross-link: Glycyl lysine isopeptide (Lys-Gly) (interchain with G-Cter in SUMO2); alternate. The tract at residues 403 to 423 is AF-2 domain; the sequence is KLEGKVPMHKLFLEMLEAMMD.

The protein belongs to the nuclear hormone receptor family. NR3 subfamily. In terms of assembly, binds DNA as a monomer or a homodimer. Interacts (via the AF2 domain) with coactivator PPARGC1A (via the L3 motif); the interaction greatly enhances transcriptional activity of genes involved in energy metabolism. Interacts with PIAS4; the interaction enhances sumoylation. Interacts with MAPK15; promotes re-localization of ESRRA to the cytoplasm through a XPO1-dependent mechanism then inhibits ESRRA transcriptional activity. Phosphorylation on Ser-19 enhances sumoylation on Lys-14 increasing repression of transcriptional activity. In terms of processing, sumoylated with SUMO2. Main site is Lys-14 which is enhanced by phosphorylation on Ser-19, cofactor activation, and by interaction with PIAS4. Sumoylation enhances repression of transcriptional activity, but has no effect on subcellular location nor on DNA binding. Post-translationally, reversibly acetylated. Acetylation by PCAF/KAT2 at Lys-129, Lys-138, Lys-160 and Lys-162 and PCAF/KAT2 decreases transcriptional activity probably by inhibiting DNA-binding activity; deacetylation involves SIRT1 and HDAC8 and increases DNA-binding.

The protein localises to the nucleus. It localises to the cytoplasm. Its function is as follows. Binds to an ERR-alpha response element (ERRE) containing a single consensus half-site, 5'-TNAAGGTCA-3'. Can bind to the medium-chain acyl coenzyme A dehydrogenase (MCAD) response element NRRE-1 and may act as an important regulator of MCAD promoter. Binds to the C1 region of the lactoferrin gene promoter. Requires dimerization and the coactivator, PGC-1A, for full activity. The ERRalpha/PGC1alpha complex is a regulator of energy metabolism. Induces the expression of PERM1 in the skeletal muscle. This chain is Steroid hormone receptor ERR1 (ESRRA), found in Homo sapiens (Human).